Here is a 260-residue protein sequence, read N- to C-terminus: Hydroxyethylthiazole kinase 1 (260 aa).

Methionine 39 contacts substrate. Positions 115 and 160 each coordinate ATP. A substrate-binding site is contributed by glycine 187.

The protein belongs to the Thz kinase family. The cofactor is Mg(2+).

The enzyme catalyses 5-(2-hydroxyethyl)-4-methylthiazole + ATP = 4-methyl-5-(2-phosphooxyethyl)-thiazole + ADP + H(+). The protein operates within cofactor biosynthesis; thiamine diphosphate biosynthesis; 4-methyl-5-(2-phosphoethyl)-thiazole from 5-(2-hydroxyethyl)-4-methylthiazole: step 1/1. Its function is as follows. Catalyzes the phosphorylation of the hydroxyl group of 4-methyl-5-beta-hydroxyethylthiazole (THZ). This Streptococcus pneumoniae (strain Hungary19A-6) protein is Hydroxyethylthiazole kinase 1.